A 296-amino-acid polypeptide reads, in one-letter code: Acetyl-coenzyme A carboxylase carboxyl transferase subunit beta (296 aa).

Residues 25-294 (LWIKDPSTGE…NSDAPAPPEA (270 aa)) enclose the CoA carboxyltransferase N-terminal domain.

This sequence belongs to the AccD/PCCB family. As to quaternary structure, acetyl-CoA carboxylase is a heterohexamer composed of biotin carboxyl carrier protein (AccB), biotin carboxylase (AccC) and two subunits each of ACCase subunit alpha (AccA) and ACCase subunit beta (AccD).

The protein resides in the cytoplasm. It catalyses the reaction N(6)-carboxybiotinyl-L-lysyl-[protein] + acetyl-CoA = N(6)-biotinyl-L-lysyl-[protein] + malonyl-CoA. It participates in lipid metabolism; malonyl-CoA biosynthesis; malonyl-CoA from acetyl-CoA: step 1/1. Its function is as follows. Component of the acetyl coenzyme A carboxylase (ACC) complex. Biotin carboxylase (BC) catalyzes the carboxylation of biotin on its carrier protein (BCCP) and then the CO(2) group is transferred by the transcarboxylase to acetyl-CoA to form malonyl-CoA. The sequence is that of Acetyl-coenzyme A carboxylase carboxyl transferase subunit beta from Brucella ovis (strain ATCC 25840 / 63/290 / NCTC 10512).